We begin with the raw amino-acid sequence, 582 residues long: Dihydroxy-acid dehydratase 3 (582 aa).

Residue Cys-67 participates in [2Fe-2S] cluster binding. Residue Asp-99 participates in Mg(2+) binding. Cys-140 contacts [2Fe-2S] cluster. Mg(2+) is bound by residues Asp-141 and Lys-142. The residue at position 142 (Lys-142) is an N6-carboxylysine. [2Fe-2S] cluster is bound at residue Cys-212. Glu-462 contributes to the Mg(2+) binding site. Catalysis depends on Ser-488, which acts as the Proton acceptor.

This sequence belongs to the IlvD/Edd family. As to quaternary structure, homodimer. [2Fe-2S] cluster is required as a cofactor. It depends on Mg(2+) as a cofactor.

The enzyme catalyses (2R)-2,3-dihydroxy-3-methylbutanoate = 3-methyl-2-oxobutanoate + H2O. The catalysed reaction is (2R,3R)-2,3-dihydroxy-3-methylpentanoate = (S)-3-methyl-2-oxopentanoate + H2O. The protein operates within amino-acid biosynthesis; L-isoleucine biosynthesis; L-isoleucine from 2-oxobutanoate: step 3/4. Its pathway is amino-acid biosynthesis; L-valine biosynthesis; L-valine from pyruvate: step 3/4. Functionally, functions in the biosynthesis of branched-chain amino acids. Catalyzes the dehydration of (2R,3R)-2,3-dihydroxy-3-methylpentanoate (2,3-dihydroxy-3-methylvalerate) into 2-oxo-3-methylpentanoate (2-oxo-3-methylvalerate) and of (2R)-2,3-dihydroxy-3-methylbutanoate (2,3-dihydroxyisovalerate) into 2-oxo-3-methylbutanoate (2-oxoisovalerate), the penultimate precursor to L-isoleucine and L-valine, respectively. This is Dihydroxy-acid dehydratase 3 from Bradyrhizobium diazoefficiens (strain JCM 10833 / BCRC 13528 / IAM 13628 / NBRC 14792 / USDA 110).